Reading from the N-terminus, the 331-residue chain is Sucrose operon repressor (331 aa).

Positions 1–56 (MASLKDVARLAGVSMMTVSRVMHNAESVRPATRDRVLQAIQTLNYVPDLSARKMRA) constitute an HTH lacI-type domain. Residues 4–23 (LKDVARLAGVSMMTVSRVMH) constitute a DNA-binding region (H-T-H motif).

Functionally, repressor for the csc operon. Binds D-fructose as an inducer. The protein is Sucrose operon repressor (cscR) of Escherichia coli.